A 670-amino-acid polypeptide reads, in one-letter code: Leucine zipper putative tumor suppressor 2 (670 aa).

Disordered stretches follow at residues 1–52 (MAIV…GVPG), 92–131 (NEDF…IPVS), and 150–323 (PVLP…PSDE). The required for centrosomal localization stretch occupies residues 1-333 (MAIVQTLPVP…ALLHCVLEGK (333 aa)). The span at 187 to 199 (ASSSSSSSSSSAA) shows a compositional bias: low complexity. Positions 213–233 (PSGTLSDSGRNSLSSLPTYST) are enriched in polar residues. Composition is skewed to low complexity over residues 242–251 (SPGGHLPSHG) and 260–310 (PARG…GGDR). Phosphoserine is present on residues S249 and S296. A compositionally biased stretch (pro residues) spans 311–321 (SPPPPPPPPPS). Positions 329-650 (VLEGKLRDRE…LELEARELAD (322 aa)) form a coiled coil. Positions 448-670 (SGEISLLKQQ…CLEEITATEI (223 aa)) are sufficient for interaction with CTNNB1. A sufficient for interaction with KATNB1 and for inhibition of katanin-mediated microtubule severing region spans residues 451–670 (ISLLKQQLKE…CLEEITATEI (220 aa)). S571 is subject to Phosphoserine. The short motif at 632-641 (LEQELQQLSL) is the Nuclear export signal element.

This sequence belongs to the LZTS2 family. As to quaternary structure, interacts with CTNNB1. Interacts with KATNB1. Also interacts with gamma-tubulin and KIF23.

It is found in the cytoplasm. The protein resides in the cytoskeleton. The protein localises to the microtubule organizing center. It localises to the centrosome. In terms of biological role, negative regulator of katanin-mediated microtubule severing and release from the centrosome. Required for central spindle formation and the completion of cytokinesis. May negatively regulate axonal outgrowth by preventing the formation of microtubule bundles that are necessary for transport within the elongating axon. Negative regulator of the Wnt signaling pathway. Represses beta-catenin-mediated transcriptional activation by promoting the nuclear exclusion of beta-catenin. The chain is Leucine zipper putative tumor suppressor 2 (Lzts2) from Rattus norvegicus (Rat).